The sequence spans 78 residues: Large ribosomal subunit protein bL28 (78 aa).

This sequence belongs to the bacterial ribosomal protein bL28 family.

The chain is Large ribosomal subunit protein bL28 from Haemophilus influenzae (strain 86-028NP).